The sequence spans 63 residues: Large ribosomal subunit protein bL28 (63 aa).

The protein belongs to the bacterial ribosomal protein bL28 family.

The polypeptide is Large ribosomal subunit protein bL28 (Alkaliphilus metalliredigens (strain QYMF)).